A 609-amino-acid polypeptide reads, in one-letter code: UvrABC system protein C (609 aa).

One can recognise a GIY-YIG domain in the interval 16–94 (SSAGVYRMYD…IKQYMPKYNV (79 aa)). The 36-residue stretch at 203-238 (KQVISELVAKMEEAAEQQAYEQAARFRDQIMALRRV) folds into the UVR domain.

It belongs to the UvrC family. Interacts with UvrB in an incision complex.

It localises to the cytoplasm. In terms of biological role, the UvrABC repair system catalyzes the recognition and processing of DNA lesions. UvrC both incises the 5' and 3' sides of the lesion. The N-terminal half is responsible for the 3' incision and the C-terminal half is responsible for the 5' incision. This Shewanella oneidensis (strain ATCC 700550 / JCM 31522 / CIP 106686 / LMG 19005 / NCIMB 14063 / MR-1) protein is UvrABC system protein C.